A 484-amino-acid chain; its full sequence is uncharacterized protein (484 aa).

Residues 25-45 (PLSLFVVLAAVPLPIYFSGLL) form a helical membrane-spanning segment. An EF-hand domain is found at 384 to 419 (LSFEETKELWVRADLDGNGVFDYEELKKIWNMTMVN). Positions 397, 399, 401, and 408 each coordinate Ca(2+).

The protein resides in the membrane. This is an uncharacterized protein from Arabidopsis thaliana (Mouse-ear cress).